The sequence spans 166 residues: 2-C-methyl-D-erythritol 2,4-cyclodiphosphate synthase (166 aa).

A divalent metal cation contacts are provided by Asp17 and His19. 4-CDP-2-C-methyl-D-erythritol 2-phosphate is bound by residues 17 to 19 (DSH) and 43 to 44 (HS). A divalent metal cation is bound at residue His51. Residues 65 to 67 (DIG), 109 to 115 (AQKPKMA), and Arg151 each bind 4-CDP-2-C-methyl-D-erythritol 2-phosphate.

It belongs to the IspF family. As to quaternary structure, homotrimer. A divalent metal cation is required as a cofactor.

The catalysed reaction is 4-CDP-2-C-methyl-D-erythritol 2-phosphate = 2-C-methyl-D-erythritol 2,4-cyclic diphosphate + CMP. Its pathway is isoprenoid biosynthesis; isopentenyl diphosphate biosynthesis via DXP pathway; isopentenyl diphosphate from 1-deoxy-D-xylulose 5-phosphate: step 4/6. Functionally, involved in the biosynthesis of isopentenyl diphosphate (IPP) and dimethylallyl diphosphate (DMAPP), two major building blocks of isoprenoid compounds. Catalyzes the conversion of 4-diphosphocytidyl-2-C-methyl-D-erythritol 2-phosphate (CDP-ME2P) to 2-C-methyl-D-erythritol 2,4-cyclodiphosphate (ME-CPP) with a corresponding release of cytidine 5-monophosphate (CMP). This Rhodopirellula baltica (strain DSM 10527 / NCIMB 13988 / SH1) protein is 2-C-methyl-D-erythritol 2,4-cyclodiphosphate synthase.